A 609-amino-acid polypeptide reads, in one-letter code: Sodium- and chloride-dependent GABA transporter 2 (609 aa).

The segment covering 1 to 13 (MDSRASGTASNGE) has biased composition (polar residues). The segment at 1 to 23 (MDSRASGTASNGETKPVYPVMEK) is disordered. The Cytoplasmic portion of the chain corresponds to 1–40 (MDSRASGTASNGETKPVYPVMEKEEEEGTLERGHWNNKME). The next 3 helical transmembrane spans lie at 41-61 (FVLS…FPYL), 68-88 (GAFF…VFLL), and 121-141 (IVIL…FYLF). Residues 142–206 (SSFTIDLPWG…GIQHLGALRW (65 aa)) lie on the Extracellular side of the membrane. The cysteines at positions 153 and 162 are disulfide-linked. N-linked (GlcNAc...) asparagine glycosylation is found at Asn-169 and Asn-173. A run of 2 helical transmembrane segments spans residues 207-227 (ELAL…WKGV) and 233-253 (VVYF…IRGV). A glycan (N-linked (GlcNAc...) asparagine) is linked at Asn-269. The next 7 helical transmembrane spans lie at 282–302 (AGTQ…ALGS), 319–339 (FLNS…LGFM), 366–386 (VVML…VVLL), 418–438 (VLIL…LTEG), 453–473 (GMCL…VYGA), 490–510 (PLIK…TFLF), and 528–548 (WWGD…IPAW). Over 549-609 (SLYRLGTLKG…LRLTELESHC (61 aa)) the chain is Cytoplasmic. Thr-594 bears the Phosphothreonine mark. A Phosphoserine modification is found at Ser-598.

Belongs to the sodium:neurotransmitter symporter (SNF) (TC 2.A.22) family. SLC6A13 subfamily.

It is found in the cell membrane. The protein resides in the basolateral cell membrane. The enzyme catalyses 4-aminobutanoate(out) + chloride(out) + 2 Na(+)(out) = 4-aminobutanoate(in) + chloride(in) + 2 Na(+)(in). The catalysed reaction is taurine(out) + chloride(out) + 2 Na(+)(out) = taurine(in) + chloride(in) + 2 Na(+)(in). It catalyses the reaction beta-alanine(out) + chloride(out) + 2 Na(+)(out) = beta-alanine(in) + chloride(in) + 2 Na(+)(in). It carries out the reaction hypotaurine(out) + chloride(out) + 2 Na(+)(out) = hypotaurine(in) + chloride(in) + 2 Na(+)(in). Mediates sodium- and chloride-dependent transport of gamma-aminobutyric acid (GABA). Can also mediate transport of beta-alanine, taurine and hypotaurine. The chain is Sodium- and chloride-dependent GABA transporter 2 (SLC6A13) from Macaca fascicularis (Crab-eating macaque).